Reading from the N-terminus, the 1037-residue chain is Sentrin-specific protease 7 (1037 aa).

Over residues 1 to 10 (MDRARPGRRR) the composition is skewed to basic residues. Disordered regions lie at residues 1-27 (MDRA…SSPA) and 185-399 (SDTA…ENSS). Phosphoserine occurs at positions 12, 13, and 25. Positions 192–208 (SEQLSSSSDGSLESCQS) are enriched in low complexity. A compositionally biased stretch (polar residues) spans 272–282 (GTSNKNTSYSY). Residues 290-300 (VSRKRKKRGRS) are compositionally biased toward basic residues. Basic and acidic residues-rich tracts occupy residues 301–321 (NFHD…HTKE) and 328–341 (VSRK…DSHQ). Over residues 379-399 (ASSPNKSLESSASSEVSENSS) the composition is skewed to low complexity. Phosphoserine occurs at positions 434 and 435. Positions 747–1037 (LGVTNEDLEC…HLQQQKGGSC (291 aa)) are protease. His847 is a catalytic residue. The interval 873-909 (QFQGQQSQHDHKMTDNDPHTTSTVSTSAEDSQSTEVN) is disordered. Basic and acidic residues predominate over residues 880–890 (QHDHKMTDNDP). A compositionally biased stretch (polar residues) spans 891-909 (HTTSTVSTSAEDSQSTEVN). The active site involves Asp926. The Nucleophile role is filled by Cys979.

It belongs to the peptidase C48 family.

Its subcellular location is the cytoplasm. Its function is as follows. Protease that acts as a positive regulator of the cGAS-STING pathway by catalyzing desumoylation of CGAS. Desumoylation of CGAS promotes DNA-binding activity of CGAS, subsequent oligomerization and activation. Deconjugates SUMO2 and SUMO3 from targeted proteins, but not SUMO1. Catalyzes the deconjugation of poly-SUMO2 and poly-SUMO3 chains. Has very low efficiency in processing full-length SUMO proteins to their mature forms. This chain is Sentrin-specific protease 7, found in Mus musculus (Mouse).